The sequence spans 274 residues: Protein RecA (274 aa).

An ATP-binding site is contributed by 43 to 50 (GPESSGKT).

This sequence belongs to the RecA family.

Its subcellular location is the cytoplasm. Functionally, can catalyze the hydrolysis of ATP in the presence of single-stranded DNA, the ATP-dependent uptake of single-stranded DNA by duplex DNA, and the ATP-dependent hybridization of homologous single-stranded DNAs. It interacts with LexA causing its activation and leading to its autocatalytic cleavage. This chain is Protein RecA, found in Neisseria flavescens.